Consider the following 421-residue polypeptide: Glutamate-1-semialdehyde 2,1-aminomutase (421 aa).

N6-(pyridoxal phosphate)lysine is present on lysine 261.

This sequence belongs to the class-III pyridoxal-phosphate-dependent aminotransferase family. HemL subfamily. Requires pyridoxal 5'-phosphate as cofactor.

It localises to the cytoplasm. It carries out the reaction (S)-4-amino-5-oxopentanoate = 5-aminolevulinate. Its pathway is porphyrin-containing compound metabolism; protoporphyrin-IX biosynthesis; 5-aminolevulinate from L-glutamyl-tRNA(Glu): step 2/2. The polypeptide is Glutamate-1-semialdehyde 2,1-aminomutase (hemL) (Thermoplasma acidophilum (strain ATCC 25905 / DSM 1728 / JCM 9062 / NBRC 15155 / AMRC-C165)).